Consider the following 245-residue polypeptide: DNA repair protein RecO (245 aa).

This sequence belongs to the RecO family.

In terms of biological role, involved in DNA repair and RecF pathway recombination. The protein is DNA repair protein RecO of Erwinia tasmaniensis (strain DSM 17950 / CFBP 7177 / CIP 109463 / NCPPB 4357 / Et1/99).